A 278-amino-acid polypeptide reads, in one-letter code: Protein irg-2 (278 aa).

The disordered stretch occupies residues 152-179 (NSIRGQPFKSLQPENRTPTQVTGHQQES). The span at 163–179 (QPENRTPTQVTGHQQES) shows a compositional bias: polar residues.

Its function is as follows. Plays a role in innate immunity by conferring resistance to virulent strains of the Gram-negative bacterium P.aeruginosa via the zip-2 pathway and independent of the pmk-1 p38MAPK pathway. Induced as part of several immune responses to translational inhibition arising from endocytosis of ToxA during P.aeruginosa infection or exposure to exogenous cycloheximide. This is Protein irg-2 from Caenorhabditis elegans.